The primary structure comprises 333 residues: EP300-interacting inhibitor of differentiation 3 (333 aa).

Belongs to the NSE4 family. Component of the SMC5-SMC6 complex which consists at least of SMC5, SMC6, NSMCE2, NSMCE1, NSMCE4A or EID3 and NSMCE3; EID3 seems to be a testis-specific subunit. NSMCE1, NSMCE4A or EID3 and NSMCE3 probably form a subcomplex that bridges the head domains of the SMC5:SMC6 heterodimer. Homodimer, and heterodimer with EID2. Interacts with the C-terminal region of CREBBP. In terms of tissue distribution, highly expressed in testis.

The protein resides in the nucleus. It is found in the cytoplasm. It localises to the chromosome. Its subcellular location is the telomere. Functionally, tissue-specific component of the SMC5-SMC6 complex, a complex involved in repair of DNA double-strand breaks by homologous recombination. The complex may promote sister chromatid homologous recombination by recruiting the SMC1-SMC3 cohesin complex to double-strand breaks. The complex is required for telomere maintenance via recombination and mediates sumoylation of shelterin complex (telosome) components. Its function is as follows. Acts as a repressor of nuclear receptor-dependent transcription possibly by interfering with CREBBP-dependent coactivation. May function as a coinhibitor of other CREBBP/EP300-dependent transcription factors. The chain is EP300-interacting inhibitor of differentiation 3 from Homo sapiens (Human).